The chain runs to 205 residues: StAR-related lipid transfer protein 4 (205 aa).

The START domain occupies 1–205 (MEGLSDVASF…NFYGDLRKAL (205 aa)).

The enzyme catalyses cholesterol(in) = cholesterol(out). Functionally, involved in the intracellular transport of cholesterol. Binds cholesterol or other sterols. The polypeptide is StAR-related lipid transfer protein 4 (STARD4) (Homo sapiens (Human)).